A 501-amino-acid polypeptide reads, in one-letter code: Phosphatase and actin regulator 1 (501 aa).

One copy of the RPEL 1 repeat lies at 1-18; sequence MRQSREELIKRGVLKEIF. 2 disordered regions span residues 21–46 and 295–329; these read DGEL…QVLS and DNKE…EDNS. Residues 36–46 are compositionally biased toward low complexity; sequence GQPLGSGQVLS. The span at 295-304 shows a compositional bias: basic and acidic residues; it reads DNKENVPHEA. The span at 317–328 shows a compositional bias: acidic residues; that stretch reads EEEEEEDEDEDN. RPEL repeat units follow at residues 343–368, 381–406, and 419–444; these read DSLA…PMQT, TKLT…KPRN, and RRLT…IRFS. The tract at residues 382 to 415 is disordered; sequence KLTRRLSQRPTAEELEQRNILKPRNEQEEQEEKR. The span at 392-415 shows a compositional bias: basic and acidic residues; it reads TAEELEQRNILKPRNEQEEQEEKR.

This sequence belongs to the phosphatase and actin regulator family. In terms of assembly, interacts (via RPEL repeats) with ACTA1. In terms of tissue distribution, expressed in the gizzard, and in neurons from central and peripheral nervous systems.

It is found in the cytoplasm. Its subcellular location is the synapse. The protein resides in the nucleus. In terms of biological role, binds actin monomers (G actin) and plays a role in the reorganization of the actin cytoskeleton and in formation of actin stress fibers. The chain is Phosphatase and actin regulator 1 (PHACTR1) from Gallus gallus (Chicken).